The primary structure comprises 354 residues: Ferrochelatase (354 aa).

Residues His191 and Glu271 each coordinate Fe cation.

Belongs to the ferrochelatase family.

The protein localises to the cytoplasm. The enzyme catalyses heme b + 2 H(+) = protoporphyrin IX + Fe(2+). Its pathway is porphyrin-containing compound metabolism; protoheme biosynthesis; protoheme from protoporphyrin-IX: step 1/1. Functionally, catalyzes the ferrous insertion into protoporphyrin IX. The polypeptide is Ferrochelatase (Rickettsia bellii (strain OSU 85-389)).